The primary structure comprises 194 residues: Probable thymidylate kinase (194 aa).

Position 8 to 15 (8 to 15 (GIDGSGKT)) interacts with ATP.

The protein belongs to the thymidylate kinase family.

It carries out the reaction dTMP + ATP = dTDP + ADP. This Sulfolobus acidocaldarius (strain ATCC 33909 / DSM 639 / JCM 8929 / NBRC 15157 / NCIMB 11770) protein is Probable thymidylate kinase.